The sequence spans 504 residues: Cytochrome P450 71B4 (504 aa).

A helical transmembrane segment spans residues M1–F21. Residue C446 coordinates heme.

It belongs to the cytochrome P450 family. Heme serves as cofactor.

Its subcellular location is the membrane. This is Cytochrome P450 71B4 (CYP71B4) from Arabidopsis thaliana (Mouse-ear cress).